Consider the following 328-residue polypeptide: Malate dehydrogenase (328 aa).

Position 11–17 (Gly11–Gly17) interacts with NAD(+). 2 residues coordinate substrate: Arg94 and Arg100. NAD(+) is bound by residues Asn107, Gln114, and Val131–Asn133. Substrate is bound by residues Asn133 and Arg164. Residue His189 is the Proton acceptor of the active site.

This sequence belongs to the LDH/MDH superfamily. MDH type 2 family.

It carries out the reaction (S)-malate + NAD(+) = oxaloacetate + NADH + H(+). In terms of biological role, catalyzes the reversible oxidation of malate to oxaloacetate. The chain is Malate dehydrogenase from Stenotrophomonas maltophilia (strain K279a).